The following is a 71-amino-acid chain: Small ribosomal subunit protein bS21 (71 aa).

This sequence belongs to the bacterial ribosomal protein bS21 family.

The polypeptide is Small ribosomal subunit protein bS21 (Blochmanniella floridana).